Consider the following 414-residue polypeptide: Ornithine aminotransferase (414 aa).

Cys-154 and Cys-163 are joined by a disulfide. At Lys-262 the chain carries N6-(pyridoxal phosphate)lysine.

The protein belongs to the class-III pyridoxal-phosphate-dependent aminotransferase family. In terms of assembly, homodimer. Requires pyridoxal 5'-phosphate as cofactor. Post-translationally, the disulfide bond between Cys-154 and Cys-163 is reduced by TRX1 which increases OAT catalytic activity.

It is found in the cytoplasm. It catalyses the reaction a 2-oxocarboxylate + L-ornithine = L-glutamate 5-semialdehyde + an L-alpha-amino acid. The enzyme catalyses L-ornithine + 2-oxoglutarate = L-glutamate 5-semialdehyde + L-glutamate. Its pathway is amino-acid biosynthesis; L-proline biosynthesis; L-glutamate 5-semialdehyde from L-ornithine: step 1/1. Unlike for mammalian OATs, activity is increased by TRX1-mediated reduction of the disulfide bond between Cys-154 and Cys-163. Binding to TRX1 may also induce conformational changes that facilitate substrate binding. Its function is as follows. Catalyzes the transamination of alpha-ketoglutarate with ornithine or N-acetylornithine and of glutamate-5-semialdehyde with glutamate and alanine. The polypeptide is Ornithine aminotransferase (Plasmodium yoelii yoelii).